The primary structure comprises 353 residues: COMPASS component SPP1 (353 aa).

Residues 22 to 72 form a PHD-type zinc finger; that stretch reads DVYCICKRPDYGELMVGCDGCDDWFHFTCLHIPEQFKDLVFSFYCPYCQAG. 8 residues coordinate Zn(2+): Cys25, Cys27, Cys39, Cys42, His47, Cys50, Cys66, and Cys69. The interval 83–124 is non coventional C3H-type zinc finger; the sequence is NGEGSLPKTLWKRKCRISDCYKPCLQDSKYCSEEHGREFVND. Phosphoserine is present on Ser87. Residues Cys97, Cys102, Cys113, and His117 each contribute to the Zn(2+) site. A compositionally biased stretch (basic and acidic residues) spans 235–244; sequence VECGKEDSKG. Residues 235 to 255 form a disordered region; the sequence is VECGKEDSKGTKRKKKKNSSR. A compositionally biased stretch (basic residues) spans 245–255; the sequence is TKRKKKKNSSR.

In terms of assembly, component of the Set1C/COMPASS complex which consists of SET1(2), BRE2(2), SPP1(2), SDC1(1), SHG1(1), SWD1(1), SWD2(1), and SWD3(1).

Its subcellular location is the nucleus. In terms of biological role, component of the Set1C/COMPASS complex that specifically mono-, di- and trimethylates histone H3 to form H3K4me1/2/3, which subsequently plays a role in telomere length maintenance and transcription elongation regulation. COMPASS recognizes ubiquitinated H2B on one face of the nucleosome which stimulates the methylation of H3 on the opposing face. SPP1/CPS40 can recognize methylated histone lysine residue H3K4me3 or unmethylated H3K4. Stimulates the RNA binding activity of SET1. This chain is COMPASS component SPP1, found in Saccharomyces cerevisiae (strain ATCC 204508 / S288c) (Baker's yeast).